Here is a 478-residue protein sequence, read N- to C-terminus: tRNA-2-methylthio-N(6)-dimethylallyladenosine synthase (478 aa).

The MTTase N-terminal domain maps to 39–157 (KLVFTQTFGC…FPQLLTESIN (119 aa)). [4Fe-4S] cluster is bound by residues Cys-48, Cys-84, Cys-118, Cys-194, Cys-198, and Cys-201. Residues 180–410 (RKFELKAFVN…LEAVNRISAE (231 aa)) form the Radical SAM core domain. Positions 410 to 477 (EINDGYKDRI…TFSLNGILVN (68 aa)) constitute a TRAM domain.

Belongs to the methylthiotransferase family. MiaB subfamily. As to quaternary structure, monomer. [4Fe-4S] cluster serves as cofactor.

The protein localises to the cytoplasm. It carries out the reaction N(6)-dimethylallyladenosine(37) in tRNA + (sulfur carrier)-SH + AH2 + 2 S-adenosyl-L-methionine = 2-methylsulfanyl-N(6)-dimethylallyladenosine(37) in tRNA + (sulfur carrier)-H + 5'-deoxyadenosine + L-methionine + A + S-adenosyl-L-homocysteine + 2 H(+). Functionally, catalyzes the methylthiolation of N6-(dimethylallyl)adenosine (i(6)A), leading to the formation of 2-methylthio-N6-(dimethylallyl)adenosine (ms(2)i(6)A) at position 37 in tRNAs that read codons beginning with uridine. This chain is tRNA-2-methylthio-N(6)-dimethylallyladenosine synthase, found in Clostridioides difficile (strain 630) (Peptoclostridium difficile).